A 197-amino-acid polypeptide reads, in one-letter code: Isopentenyl-diphosphate Delta-isomerase (197 aa).

2 residues coordinate Mn(2+): histidine 41 and histidine 48. Residues 46 to 183 (QLHRAFSVFL…SWFMTVLDAA (138 aa)) form the Nudix hydrolase domain. Cysteine 83 is an active-site residue. Residue cysteine 83 participates in Mg(2+) binding. Histidine 85 provides a ligand contact to Mn(2+). Residue glutamate 103 coordinates Mg(2+). 2 residues coordinate Mn(2+): glutamate 130 and glutamate 132. Glutamate 132 is an active-site residue.

This sequence belongs to the IPP isomerase type 1 family. Requires Mg(2+) as cofactor. The cofactor is Mn(2+).

The protein localises to the cytoplasm. It catalyses the reaction isopentenyl diphosphate = dimethylallyl diphosphate. It functions in the pathway isoprenoid biosynthesis; dimethylallyl diphosphate biosynthesis; dimethylallyl diphosphate from isopentenyl diphosphate: step 1/1. Functionally, catalyzes the 1,3-allylic rearrangement of the homoallylic substrate isopentenyl (IPP) to its highly electrophilic allylic isomer, dimethylallyl diphosphate (DMAPP). This chain is Isopentenyl-diphosphate Delta-isomerase, found in Streptomyces avermitilis (strain ATCC 31267 / DSM 46492 / JCM 5070 / NBRC 14893 / NCIMB 12804 / NRRL 8165 / MA-4680).